A 543-amino-acid polypeptide reads, in one-letter code: Protein MGF 505-10R (543 aa).

Belongs to the asfivirus MGF 505 family.

Functionally, plays a role in virus cell tropism, and may be required for efficient virus replication in macrophages. The protein is Protein MGF 505-10R of Ornithodoros (relapsing fever ticks).